The sequence spans 444 residues: tRNA modification GTPase MnmE (444 aa).

3 residues coordinate (6S)-5-formyl-5,6,7,8-tetrahydrofolate: arginine 21, glutamate 79, and lysine 118. In terms of domain architecture, TrmE-type G spans 215-365 (GLNVVIVGKP…LVNEIKTNLK (151 aa)). Residue asparagine 225 participates in K(+) binding. GTP is bound by residues 225–230 (NVGKSS), 244–250 (SDIKGTT), and 269–272 (DTAG). A Mg(2+)-binding site is contributed by serine 229. 3 residues coordinate K(+): serine 244, isoleucine 246, and threonine 249. A Mg(2+)-binding site is contributed by threonine 250. Position 444 (lysine 444) interacts with (6S)-5-formyl-5,6,7,8-tetrahydrofolate.

The protein belongs to the TRAFAC class TrmE-Era-EngA-EngB-Septin-like GTPase superfamily. TrmE GTPase family. Homodimer. Heterotetramer of two MnmE and two MnmG subunits. Requires K(+) as cofactor.

It is found in the cytoplasm. Exhibits a very high intrinsic GTPase hydrolysis rate. Involved in the addition of a carboxymethylaminomethyl (cmnm) group at the wobble position (U34) of certain tRNAs, forming tRNA-cmnm(5)s(2)U34. The chain is tRNA modification GTPase MnmE from Malacoplasma penetrans (strain HF-2) (Mycoplasma penetrans).